The sequence spans 417 residues: Serpin A3-7 (417 aa).

The N-terminal stretch at 1–25 (MRTERTSFLLALGLLVSGFCSRVHC) is a signal peptide. Residues Asn103, Asn183, Asn221, and Asn267 are each glycosylated (N-linked (GlcNAc...) asparagine).

Belongs to the serpin family. As to quaternary structure, homodimer.

Its subcellular location is the cytoplasmic vesicle. The protein localises to the secretory vesicle. It localises to the chromaffin granule. The protein resides in the secreted. Its function is as follows. Serine protease inhibitor. The polypeptide is Serpin A3-7 (Bos taurus (Bovine)).